The primary structure comprises 213 residues: Orotate phosphoribosyltransferase (213 aa).

A 5-phospho-alpha-D-ribose 1-diphosphate-binding site is contributed by K26. 34 to 35 serves as a coordination point for orotate; that stretch reads FF. Residues 72-73, R99, K100, K103, H105, and 124-132 contribute to the 5-phospho-alpha-D-ribose 1-diphosphate site; these read YK and DDVITAGTA. Orotate contacts are provided by T128 and R156.

It belongs to the purine/pyrimidine phosphoribosyltransferase family. PyrE subfamily. As to quaternary structure, homodimer. It depends on Mg(2+) as a cofactor.

The catalysed reaction is orotidine 5'-phosphate + diphosphate = orotate + 5-phospho-alpha-D-ribose 1-diphosphate. It participates in pyrimidine metabolism; UMP biosynthesis via de novo pathway; UMP from orotate: step 1/2. Functionally, catalyzes the transfer of a ribosyl phosphate group from 5-phosphoribose 1-diphosphate to orotate, leading to the formation of orotidine monophosphate (OMP). In Shigella dysenteriae serotype 1 (strain Sd197), this protein is Orotate phosphoribosyltransferase.